The primary structure comprises 54 residues: Toxin AnmTx Cj 1c-1 (54 aa).

The signal sequence occupies residues 1–7 (MLNKRGV). Disulfide bonds link cysteine 9/cysteine 50, cysteine 11/cysteine 41, and cysteine 33/cysteine 51. Position 53 is a glutamic acid 1-amide (glutamate 53).

This sequence belongs to the sea anemone sodium channel inhibitory toxin family. Type I subfamily. Post-translationally, contains 3 disulfide bonds.

It localises to the secreted. The protein resides in the nematocyst. Its function is as follows. In vivo, induces marked paralysis on shrimps (C.multidentata) at 10-20 seconds after injection and a weak toxicity when injected into insect larvae (M.domestica). The polypeptide is Toxin AnmTx Cj 1c-1 (Epiactis japonica (Sea anemone)).